The following is a 381-amino-acid chain: Tumor necrosis factor receptor superfamily member 10B (381 aa).

An N-terminal signal peptide occupies residues 1–52 (MEPPGPSTPTASAAARADHYTPGLRPLPKRRLLYSFALLLAVLQAVFVPVTA). TNFR-Cys repeat units follow at residues 26–86 (PLPK…GNCK), 87–129 (PCRE…NTVC), and 130–169 (RCKP…NRKC). The Extracellular segment spans residues 53 to 180 (NPAHNRPAGL…SKTAWASWHK (128 aa)). 7 disulfides stabilise this stretch: Cys-74/Cys-85, Cys-88/Cys-105, Cys-108/Cys-121, Cys-111/Cys-129, Cys-131/Cys-145, Cys-148/Cys-161, and Cys-151/Cys-169. The chain crosses the membrane as a helical span at residues 181–201 (LGLWIGLLVPVVLLIGALLVW). Topologically, residues 202–381 (KTGAWRQWLL…ETGPGGSQCV (180 aa)) are cytoplasmic. Positions 228–260 (HSSLLDRQTSSTTNDSNHNTEPGKTQKTGKKLL) are disordered. The segment covering 236–247 (TSSTTNDSNHNT) has biased composition (low complexity). Residues 273-356 (KFIFEYCSDI…DAMEKIEDYA (84 aa)) enclose the Death domain. Arg-293 carries (Microbial infection) N-beta-linked (GlcNAc) arginine glycosylation.

Monomer. Can interact with TRADD and RIPK1. Three TNFRSF10B molecules interact with the TNFSF10 homotrimer. In the absence of stimulation, interacts with BIRC2, DDX3X and GSK3B. The interaction with BIRC2 and DDX3X is further enhanced upon receptor stimulation and accompanied by DDX3X and BIRC2 cleavage. (Microbial infection) Glycosylated at Arg-293 by S.typhimurium protein Ssek3. In terms of tissue distribution, highly expressed in heart, lung and kidney.

The protein resides in the membrane. Functionally, receptor for the cytotoxic ligand TNFSF10/TRAIL. The adapter molecule FADD recruits caspase-8 to the activated receptor. The resulting death-inducing signaling complex (DISC) performs caspase-8 proteolytic activation which initiates the subsequent cascade of caspases (aspartate-specific cysteine proteases) mediating apoptosis. Promotes the activation of NF-kappa-B. Essential for ER stress-induced apoptosis. The sequence is that of Tumor necrosis factor receptor superfamily member 10B (Tnfrsf10b) from Mus musculus (Mouse).